We begin with the raw amino-acid sequence, 131 residues long: UPF0212 protein TK1194 (131 aa).

The protein belongs to the UPF0212 family.

The sequence is that of UPF0212 protein TK1194 from Thermococcus kodakarensis (strain ATCC BAA-918 / JCM 12380 / KOD1) (Pyrococcus kodakaraensis (strain KOD1)).